The sequence spans 267 residues: MSDILKQICDVKVQEVAAAQKRMPFADMRRDAESRVLTRDFVGALRAKIAAGQAGVIAEIKKASPSKGVIREDFIPADIAQSYADGDGKGVSAACLSVLTDKQFFQGSVDYLKQARASCHLPVLRKDFMVDPYQIYESRAMGADCVLLIAACLDDAQMAEMEQIAHSLDMAVLVEVHDGAELDRALRLKTPLVGINNRNLRSFEVSIQTTLDLQKNVPADRLLVTESGIGSREDVKAMRDAGIHSFLVGEAFMRAKEPGEALAKLFA.

This sequence belongs to the TrpC family.

The catalysed reaction is 1-(2-carboxyphenylamino)-1-deoxy-D-ribulose 5-phosphate + H(+) = (1S,2R)-1-C-(indol-3-yl)glycerol 3-phosphate + CO2 + H2O. Its pathway is amino-acid biosynthesis; L-tryptophan biosynthesis; L-tryptophan from chorismate: step 4/5. This chain is Indole-3-glycerol phosphate synthase, found in Delftia acidovorans (strain DSM 14801 / SPH-1).